The primary structure comprises 819 residues: MRYDPSLIEEKWQKFWKEEQTFRAEEDETKTKYYVLDMFPYPSGAGLHVGHLIGYTATDIVARYKRAKGFSVLHPMGWDSFGLPAEQYAIRTGTHPRETTEKNIANFKQQLTSMGFSYDESREFATSDPEYYKWTQKLFLILYEKGLAYMADMAVNYCPELGTVLSNEEVENGFSVEGGYPVERRMLRQWVLRITAFADQLLGGLDELDWPESVKQLQRNWIGKSVGASVHFETEHGVLEVFTTRPDTLIGVSFLVLAPEHPLVDLLTSDEQKTIVAQYVKETQSKSERDRISEMKTKSGVFTGAYAKHPVTQNPIPIWIADYVLMGYGSGAVMGVPAHDDRDLLFAQQFDLPIISVVSEDGVCINSCHEDFSLDGLSGEEAKQYVINFLEKNNLGSAKVAYKLRDWLFSRQRYWGEPIPVIHFEDGSCRPLKDDELPLLPPEIQDYRPEGVGQGPLAKVKEWVNVFDSETQKEGKRETHTMPQWAGSCWYYLRFCDAHNSCAPWAEEKEQYWMPVDLYIGGAEHAVLHLLYARFWHQVFYEAGIVSTPEPFKKLVNQGLVLSTSYRIPGKGYIAPEMAKEENGQWISPSGELLDVRQEKMSKSKLNGVDPKVLIDEFGADAVRMYAMFSGPLDKNKLWSNQGVAGCRRFLNRFYEMATSSRVKDEDIFEGMSLAHKLVQRVTDDIEKLSLNTITSSFMEFINEFVKLPVYPKNAVEMAVRALAPIAPHISEELWVLLGNASGIEKAGWPKALPEYLEGKIVTIVVQVNGKLRARLDISKDAIEEEVVALAKEAVSKYLEGGVVRKTIFVLNRLVNFVI.

The 'HIGH' region motif lies at Pro-40 to His-51. The short motif at Lys-600–Ser-604 is the 'KMSKS' region element. Lys-603 is a binding site for ATP.

It belongs to the class-I aminoacyl-tRNA synthetase family.

The protein localises to the cytoplasm. It carries out the reaction tRNA(Leu) + L-leucine + ATP = L-leucyl-tRNA(Leu) + AMP + diphosphate. The chain is Leucine--tRNA ligase from Chlamydia muridarum (strain MoPn / Nigg).